A 354-amino-acid chain; its full sequence is Homer protein homolog 2 (354 aa).

The 110-residue stretch at Met-1–Ala-110 folds into the WH1 domain. A coiled-coil region spans residues Ser-92 to Glu-122. Basic and acidic residues predominate over residues Ile-112 to Glu-122. The tract at residues Ile-112–Asn-166 is disordered. Residues Thr-123–Gly-146 show a composition bias toward polar residues. Positions Thr-160–Phe-329 form a coiled coil.

Belongs to the Homer family. In terms of assembly, forms coiled-coil structures that mediate homo- and heteromultimerization. Interacts with NFATC2; interaction is reduced by AKT activation. Interacts with NFATC1 and NFATC4. Interacts with DAGLA (via PPXXF motif); this interaction is required for the cell membrane localization of DAGLA.

It localises to the cytoplasm. It is found in the cell membrane. The protein resides in the postsynaptic density. Its subcellular location is the synapse. The protein localises to the cell projection. It localises to the stereocilium. In terms of biological role, postsynaptic density scaffolding protein. Binds and cross-links cytoplasmic regions of GRM1, GRM5, ITPR1, DNM3, RYR1, RYR2, SHANK1 and SHANK3. By physically linking GRM1 and GRM5 with ER-associated ITPR1 receptors, it aids the coupling of surface receptors to intracellular calcium release. May also couple GRM1 to PI3 kinase through its interaction with AGAP2. Isoforms can be differently regulated and may play an important role in maintaining the plasticity at glutamatergic synapses. Required for normal hearing. Negatively regulates T cell activation by inhibiting the calcineurin-NFAT pathway. Acts by competing with calcineurin/PPP3CA for NFAT protein binding, hence preventing NFAT activation by PPP3CA. This Homo sapiens (Human) protein is Homer protein homolog 2.